A 327-amino-acid chain; its full sequence is DNA-directed RNA polymerase subunit alpha (327 aa).

The interval 1-233 (MVREKVKVST…NLFIPFLHVE (233 aa)) is alpha N-terminal domain (alpha-NTD). Residues 264 to 327 (TKELAFQYIF…KKILDILEKK (64 aa)) are alpha C-terminal domain (alpha-CTD).

The protein belongs to the RNA polymerase alpha chain family. As to quaternary structure, in plastids the minimal PEP RNA polymerase catalytic core is composed of four subunits: alpha, beta, beta', and beta''. When a (nuclear-encoded) sigma factor is associated with the core the holoenzyme is formed, which can initiate transcription.

It localises to the plastid. The protein resides in the chloroplast. It catalyses the reaction RNA(n) + a ribonucleoside 5'-triphosphate = RNA(n+1) + diphosphate. DNA-dependent RNA polymerase catalyzes the transcription of DNA into RNA using the four ribonucleoside triphosphates as substrates. The sequence is that of DNA-directed RNA polymerase subunit alpha from Capsella bursa-pastoris (Shepherd's purse).